Consider the following 203-residue polypeptide: Putative zinc finger protein 876 (203 aa).

4 C2H2-type zinc fingers span residues 63–85 (YTCE…KNIH), 91–113 (YKCE…KRIH), 119–141 (YKCE…KKIH), and 147–169 (YKCK…TNIH). The C2H2-type 5; degenerate zinc finger occupies 175 to 197 (YTCEECGKDFTWSSTLTVHQRIQ).

Belongs to the krueppel C2H2-type zinc-finger protein family.

It localises to the nucleus. Its function is as follows. May be involved in transcriptional regulation. The polypeptide is Putative zinc finger protein 876 (ZNF876P) (Homo sapiens (Human)).